The primary structure comprises 408 residues: Probable fructose-2,6-bisphosphatase C732.02c (408 aa).

ATP is bound at residue 16–24; that stretch reads GLPASGKTS. Residue Asp-88 is part of the active site. 127 to 132 is an ATP binding site; the sequence is NITDMC. Beta-D-fructose 6-phosphate is bound at residue Tyr-157. Arg-213 is a beta-D-fructose 2,6-bisphosphate binding site. The Tele-phosphohistidine intermediate role is filled by His-214. The beta-D-fructose 2,6-bisphosphate site is built by Asn-220 and Gly-226. Glu-285 serves as the catalytic Proton donor/acceptor. Beta-D-fructose 2,6-bisphosphate contacts are provided by Tyr-296, Arg-310, Lys-314, Tyr-325, Gln-351, and Arg-355. 307–310 contacts ATP; that stretch reads AELR. Residues 351–355 and Tyr-387 each bind ATP; that span reads QAILR.

The protein in the C-terminal section; belongs to the phosphoglycerate mutase family.

It catalyses the reaction beta-D-fructose 2,6-bisphosphate + H2O = beta-D-fructose 6-phosphate + phosphate. Its function is as follows. This is predominantly if not solely a fructose-2,6-bisphosphatase. This Schizosaccharomyces pombe (strain 972 / ATCC 24843) (Fission yeast) protein is Probable fructose-2,6-bisphosphatase C732.02c.